Reading from the N-terminus, the 455-residue chain is MSIPGLGLIPEKPATSASRTYTLEPRQEYRFSVSHGASITITLTRGTAERDGTELALNVAYTLSGVKSKILSWHGANLSIEGITDHESVAGPDDAANTAHLNLHAFLQRSREAAARNNGGGRSAPHGPRVLVAGKTGCGRTSLVRTLAAWATRTGAQPMVVDADPGEGLLTLPGTLSAAVFGTVMDVASEGGWGAAPSSGPSAVPVKLPLVFYYGRRRVEEDRDLYKGVVNSISSAISARAADDPAVRSAGMLIDTPPYVEGKGADVLIHIAEELNVNIIVTIDTPSLHTELTQRFSGVKNVLGEHVSVVALDKSSGVMERDEGFLQHMGEASIKEYFFGDAKITLSPFTQQVAFDELAIYTSPEASDYSAEPGALERIPQPLPEMAHWVLAMMDAAPNDPPHKIRYAPVSGFVYVAAVDKERRRMKILAPVSGRLGDKPLVWGKWPEPHINLLG.

ATP-binding residues include Glu-28 and Lys-67. Positions 112–131 (EAAARNNGGGRSAPHGPRVL) are disordered. 137–142 (GCGRTS) is a binding site for ATP.

Belongs to the Clp1 family. Clp1 subfamily. Component of a pre-mRNA cleavage factor complex. Interacts directly with PCF11.

The protein resides in the nucleus. Required for endonucleolytic cleavage during polyadenylation-dependent pre-mRNA 3'-end formation. In Pyricularia oryzae (strain 70-15 / ATCC MYA-4617 / FGSC 8958) (Rice blast fungus), this protein is mRNA cleavage and polyadenylation factor CLP1.